We begin with the raw amino-acid sequence, 158 residues long: Small ribosomal subunit protein bS16 (158 aa).

Low complexity predominate over residues 111–121 (AAAGLAEAPTK). The interval 111–158 (AAAGLAEAPTKPAKKAPKAEAAPKTEAAPKADAPKTEEQAGAGSGEQG) is disordered. Positions 127–148 (PKAEAAPKTEAAPKADAPKTEE) are enriched in basic and acidic residues.

It belongs to the bacterial ribosomal protein bS16 family.

This is Small ribosomal subunit protein bS16 from Salinispora arenicola (strain CNS-205).